The primary structure comprises 469 residues: uncharacterized protein (469 aa).

Disordered regions lie at residues 248–314 (RDDN…EPES) and 327–418 (QMDQ…PRPT). Polar residues-rich tracts occupy residues 292-305 (ESSNTRDQQTNAAS) and 350-365 (TARQPQVTPTRVPNTV). Residues 366–377 (TATSASTPASTS) show a composition bias toward low complexity.

This is an uncharacterized protein from Cryphonectria parasitica (Chestnut blight fungus).